The following is a 542-amino-acid chain: Beta-amylase 2, chloroplastic (542 aa).

Residues 1 to 55 (MAIRLNHSVIPVSVKLGAPTRVSARSSLPFSVGDWRGVSTFSGARPLVLAKVKLR) constitute a chloroplast transit peptide. D136, H176, and D184 together coordinate substrate. E269 serves as the catalytic Proton donor. 3 residues coordinate substrate: K377, H382, and T424. The active-site Proton acceptor is E465. Substrate is bound by residues 466–467 (NA) and R501.

This sequence belongs to the glycosyl hydrolase 14 family.

It localises to the plastid. The protein resides in the chloroplast. It catalyses the reaction Hydrolysis of (1-&gt;4)-alpha-D-glucosidic linkages in polysaccharides so as to remove successive maltose units from the non-reducing ends of the chains.. Its activity is regulated as follows. Redox regulation; active in reducing conditions, inactive in oxidizing conditions. Low beta-amylase activity. Interacts poorly with starch or other alpha-1,4-glucan. This Arabidopsis thaliana (Mouse-ear cress) protein is Beta-amylase 2, chloroplastic (BAM2).